Consider the following 200-residue polypeptide: Holliday junction resolvase RecU (200 aa).

The disordered stretch occupies residues 1 to 24; sequence MTIRYPNGKRYDQASQPHKTPIKK. Positions 85, 87, 100, and 119 each coordinate Mg(2+).

The protein belongs to the RecU family. The cofactor is Mg(2+).

Its subcellular location is the cytoplasm. It carries out the reaction Endonucleolytic cleavage at a junction such as a reciprocal single-stranded crossover between two homologous DNA duplexes (Holliday junction).. Its function is as follows. Endonuclease that resolves Holliday junction intermediates in genetic recombination. Cleaves mobile four-strand junctions by introducing symmetrical nicks in paired strands. Promotes annealing of linear ssDNA with homologous dsDNA. Required for DNA repair, homologous recombination and chromosome segregation. The chain is Holliday junction resolvase RecU from Bacillus mycoides (strain KBAB4) (Bacillus weihenstephanensis).